Consider the following 629-residue polypeptide: Plastin-1 (629 aa).

Methionine 1 bears the N-acetylmethionine mark. 2 EF-hand domains span residues glutamate 11–proline 46 and lysine 51–lysine 86. Ca(2+) contacts are provided by aspartate 24, aspartate 26, serine 28, tyrosine 30, glutamate 35, aspartate 64, asparagine 66, aspartate 68, lysine 70, and glutamate 75. 2 actin-binding regions span residues threonine 108–lysine 380 and proline 381–leucine 625. Calponin-homology (CH) domains follow at residues glutamate 122 to leucine 238, leucine 266 to proline 376, serine 395 to threonine 504, and lysine 516 to leucine 625.

Monomer. Phosphorylated. In small intestine, colon, and kidney; relatively lower levels of expression are detected in the lung and stomach.

It is found in the cytoplasm. The protein localises to the cell projection. The protein resides in the stereocilium. Functionally, actin-bundling protein. In the inner ear, it is required for stereocilia formation. Mediates liquid packing of actin filaments that is necessary for stereocilia to grow to their proper dimensions. This chain is Plastin-1 (PLS1), found in Homo sapiens (Human).